We begin with the raw amino-acid sequence, 319 residues long: Acetyl esterase (319 aa).

The short motif at 91 to 93 (HGG) is the Involved in the stabilization of the negatively charged intermediate by the formation of the oxyanion hole element. Catalysis depends on residues serine 165, aspartate 262, and histidine 292.

Belongs to the 'GDXG' lipolytic enzyme family. Homodimer. Interacts with MalT and MelA.

The protein localises to the cytoplasm. Functionally, displays esterase activity towards short chain fatty esters (acyl chain length of up to 8 carbons). Able to hydrolyze triacetylglycerol (triacetin) and tributyrylglycerol (tributyrin), but not trioleylglycerol (triolein) or cholesterol oleate. Negatively regulates MalT activity by antagonizing maltotriose binding. Inhibits MelA galactosidase activity. This Escherichia coli (strain ATCC 8739 / DSM 1576 / NBRC 3972 / NCIMB 8545 / WDCM 00012 / Crooks) protein is Acetyl esterase.